A 430-amino-acid polypeptide reads, in one-letter code: Protein trichome birefringence-like 24 (430 aa).

A helical; Signal-anchor for type II membrane protein transmembrane segment spans residues 15 to 35 (VLLIKLISAILISFFAFRLFI). The GDS motif signature appears at 153–155 (GDS). The DCXHWCLPGXXDXWN motif signature appears at 406–420 (DCLHWCLPGPFDYLN).

Belongs to the PC-esterase family. TBL subfamily.

The protein resides in the membrane. Its function is as follows. May act as a bridging protein that binds pectin and other cell wall polysaccharides. Probably involved in maintaining esterification of pectins. May be involved in the specific O-acetylation of cell wall polymers. This chain is Protein trichome birefringence-like 24 (TBL24), found in Arabidopsis thaliana (Mouse-ear cress).